The primary structure comprises 147 residues: Ribosomal RNA large subunit methyltransferase H (147 aa).

S-adenosyl-L-methionine is bound by residues Leu-64, Gly-95, and 114–119 (LSSLTL).

It belongs to the RNA methyltransferase RlmH family. Homodimer.

The protein resides in the cytoplasm. The catalysed reaction is pseudouridine(1915) in 23S rRNA + S-adenosyl-L-methionine = N(3)-methylpseudouridine(1915) in 23S rRNA + S-adenosyl-L-homocysteine + H(+). Functionally, specifically methylates the pseudouridine at position 1915 (m3Psi1915) in 23S rRNA. The chain is Ribosomal RNA large subunit methyltransferase H from Polynucleobacter asymbioticus (strain DSM 18221 / CIP 109841 / QLW-P1DMWA-1) (Polynucleobacter necessarius subsp. asymbioticus).